We begin with the raw amino-acid sequence, 82 residues long: Small ribosomal subunit protein uS17 (82 aa).

This sequence belongs to the universal ribosomal protein uS17 family. In terms of assembly, part of the 30S ribosomal subunit.

Functionally, one of the primary rRNA binding proteins, it binds specifically to the 5'-end of 16S ribosomal RNA. The sequence is that of Small ribosomal subunit protein uS17 from Nitrobacter winogradskyi (strain ATCC 25391 / DSM 10237 / CIP 104748 / NCIMB 11846 / Nb-255).